Consider the following 220-residue polypeptide: uncharacterized protein (220 aa).

The disordered stretch occupies residues Lys196–Asp220.

This is an uncharacterized protein from Invertebrate iridescent virus 6 (IIV-6).